Reading from the N-terminus, the 80-residue chain is UPF0512 protein Q (80 aa).

Belongs to the UPF0512 family.

This chain is UPF0512 protein Q, found in Dictyostelium discoideum (Social amoeba).